The sequence spans 189 residues: Segregation and condensation protein B (189 aa).

This sequence belongs to the ScpB family. As to quaternary structure, homodimer. Homodimerization may be required to stabilize the binding of ScpA to the Smc head domains. Component of a cohesin-like complex composed of ScpA, ScpB and the Smc homodimer, in which ScpA and ScpB bind to the head domain of Smc. The presence of the three proteins is required for the association of the complex with DNA.

Its subcellular location is the cytoplasm. Its function is as follows. Participates in chromosomal partition during cell division. May act via the formation of a condensin-like complex containing Smc and ScpA that pull DNA away from mid-cell into both cell halves. In Streptococcus pneumoniae serotype 19F (strain G54), this protein is Segregation and condensation protein B.